The following is a 119-amino-acid chain: C-C motif chemokine 24 (119 aa).

The N-terminal stretch at 1-26 is a signal peptide; the sequence is MAGSATIVAGLLLLVACACCIFPIDS. 2 cysteine pairs are disulfide-bonded: cysteine 33-cysteine 58 and cysteine 34-cysteine 74. Residues asparagine 54 and asparagine 115 are each glycosylated (N-linked (GlcNAc...) asparagine). The segment at 96–119 is disordered; sequence PSKGAKAVRTKFAVQRRRGNSTEV. Over residues 101-119 the composition is skewed to basic residues; sequence KAVRTKFAVQRRRGNSTEV.

Belongs to the intercrine beta (chemokine CC) family. Highest expression in jejunum and spleen. Lower levels found in liver and lung. No expression detected in kidney, thymus, brain or testis.

Its subcellular location is the secreted. Its function is as follows. Chemotactic for resting T-lymphocytes, and eosinophils. Has lower chemotactic activity for neutrophils but none for monocytes and activated lymphocytes. Is a strong suppressor of colony formation by a multipotential hematopoietic progenitor cell line. Binds to CCR3. The polypeptide is C-C motif chemokine 24 (Mus musculus (Mouse)).